Here is a 377-residue protein sequence, read N- to C-terminus: Chaperone protein DnaJ (377 aa).

The J domain maps to 5–70 (DYYEILGVSK…EKRSAYDQYG (66 aa)). A CR-type zinc finger spans residues 131–209 (GVVREICVPT…CRGSGRIERT (79 aa)). Zn(2+)-binding residues include cysteine 144, cysteine 147, cysteine 161, cysteine 164, cysteine 183, cysteine 186, cysteine 197, and cysteine 200. CXXCXGXG motif repeat units follow at residues 144-151 (CLQCRGSG), 161-168 (CVTCHGHG), 183-190 (CPSCNGHG), and 197-204 (CNKCRGSG).

It belongs to the DnaJ family. Homodimer. It depends on Zn(2+) as a cofactor.

Its subcellular location is the cytoplasm. In terms of biological role, participates actively in the response to hyperosmotic and heat shock by preventing the aggregation of stress-denatured proteins and by disaggregating proteins, also in an autonomous, DnaK-independent fashion. Unfolded proteins bind initially to DnaJ; upon interaction with the DnaJ-bound protein, DnaK hydrolyzes its bound ATP, resulting in the formation of a stable complex. GrpE releases ADP from DnaK; ATP binding to DnaK triggers the release of the substrate protein, thus completing the reaction cycle. Several rounds of ATP-dependent interactions between DnaJ, DnaK and GrpE are required for fully efficient folding. Also involved, together with DnaK and GrpE, in the DNA replication of plasmids through activation of initiation proteins. This Blochmanniella floridana protein is Chaperone protein DnaJ.